The following is a 224-amino-acid chain: UPF0758 protein PD_0117 (224 aa).

The MPN domain occupies 102–224; that stretch reads SIHDPISAGR…PVSFAEHGWL (123 aa). His173, His175, and Asp186 together coordinate Zn(2+). Residues 173 to 186 carry the JAMM motif motif; the sequence is HNHPSGNREPSPAD.

This sequence belongs to the UPF0758 family.

The chain is UPF0758 protein PD_0117 from Xylella fastidiosa (strain Temecula1 / ATCC 700964).